The sequence spans 173 residues: C-phycocyanin beta subunit (173 aa).

The residue at position 73 (asparagine 73) is an N4-methylasparagine. (2R,3E)-phycocyanobilin-binding residues include cysteine 83 and cysteine 154.

It belongs to the phycobiliprotein family. As to quaternary structure, heterodimer of an alpha and a beta subunit. Heterodimers further assemble into trimers and the trimers into hexamers. Contains two covalently linked bilin chromophores.

The protein resides in the cellular thylakoid membrane. In terms of biological role, light-harvesting photosynthetic bile pigment-protein from the phycobiliprotein complex (phycobilisome, PBS). Phycocyanin is the major phycobiliprotein in the PBS rod. The sequence is that of C-phycocyanin beta subunit (cpcB) from Mastigocladus laminosus (Fischerella sp.).